The following is a 725-amino-acid chain: 1,4-alpha-glucan branching enzyme GlgB (725 aa).

Asp403 acts as the Nucleophile in catalysis. Glu456 serves as the catalytic Proton donor.

Belongs to the glycosyl hydrolase 13 family. GlgB subfamily. In terms of assembly, monomer.

The catalysed reaction is Transfers a segment of a (1-&gt;4)-alpha-D-glucan chain to a primary hydroxy group in a similar glucan chain.. It participates in glycan biosynthesis; glycogen biosynthesis. Catalyzes the formation of the alpha-1,6-glucosidic linkages in glycogen by scission of a 1,4-alpha-linked oligosaccharide from growing alpha-1,4-glucan chains and the subsequent attachment of the oligosaccharide to the alpha-1,6 position. The sequence is that of 1,4-alpha-glucan branching enzyme GlgB from Pectobacterium atrosepticum (strain SCRI 1043 / ATCC BAA-672) (Erwinia carotovora subsp. atroseptica).